Consider the following 324-residue polypeptide: DnaJ homolog subfamily B member 2 (324 aa).

Alanine 2 is modified (N-acetylalanine). The J domain occupies 2–71; the sequence is ASYYEILDVP…REIYDRYGRE (70 aa). 2 disordered regions span residues 70-90 and 218-324; these read REGL…SGGP and LSRR…CLIL. UIM domains are found at residues 210–226 and 250–269; these read DDLA…QQPS and SEDE…MEAA. Positions 224 to 241 are enriched in polar residues; that stretch reads QPSVTSRSGGTQVQQTPA. A compositionally biased stretch (basic residues) spans 280–289; it reads QHRRQGRPKA. Residues 303-324 show a composition bias toward basic and acidic residues; the sequence is ARGEATKRSPSPEEKASRCLIL. Serine 311 bears the Phosphoserine mark. Cysteine 321 bears the Cysteine methyl ester mark. Residue cysteine 321 is the site of S-geranylgeranyl cysteine attachment. A CAAX motif motif is present at residues 321 to 324; the sequence is CLIL. A propeptide spans 322–324 (removed in mature form); that stretch reads LIL.

As to quaternary structure, interacts with HSP70 (HSPA1A or HSPA1B). Interacts with HSPA8/Hsc70. Interacts with PSMA3 and most probably with the whole proteasomal complex. Ubiquitinated by STUB1; does not lead to proteasomal degradation. More abundantly expressed in neocortex, cerebellum, spinal cord and retina where it is expressed by neuronal cells (at protein level). Detected at much lower level in non-neuronal tissues including kidney, lung, heart, skeletal muscle, spleen and testis (at protein level). Isoform 1 is more abundant in neocortex and cerebellum compared to isoform 2 (at protein level).

Its subcellular location is the cytoplasm. The protein localises to the nucleus. The protein resides in the endoplasmic reticulum membrane. Functions as a co-chaperone, regulating the substrate binding and activating the ATPase activity of chaperones of the HSP70/heat shock protein 70 family. In parallel, also contributes to the ubiquitin-dependent proteasomal degradation of misfolded proteins. Thereby, may regulate the aggregation and promote the functional recovery of misfolded proteins like HTT, MC4R, PRKN, RHO and SOD1 and be crucial for many biological processes. Isoform 1 which is localized to the endoplasmic reticulum membranes may specifically function in ER-associated protein degradation of misfolded proteins. This chain is DnaJ homolog subfamily B member 2, found in Homo sapiens (Human).